The primary structure comprises 55 residues: Large ribosomal subunit protein bL32 (55 aa).

Belongs to the bacterial ribosomal protein bL32 family.

The chain is Large ribosomal subunit protein bL32 from Aeromonas hydrophila subsp. hydrophila (strain ATCC 7966 / DSM 30187 / BCRC 13018 / CCUG 14551 / JCM 1027 / KCTC 2358 / NCIMB 9240 / NCTC 8049).